A 123-amino-acid chain; its full sequence is Small ribosomal subunit protein uS12 (123 aa).

D89 carries the post-translational modification 3-methylthioaspartic acid.

Belongs to the universal ribosomal protein uS12 family. Part of the 30S ribosomal subunit. Contacts proteins S8 and S17. May interact with IF1 in the 30S initiation complex.

In terms of biological role, with S4 and S5 plays an important role in translational accuracy. Its function is as follows. Interacts with and stabilizes bases of the 16S rRNA that are involved in tRNA selection in the A site and with the mRNA backbone. Located at the interface of the 30S and 50S subunits, it traverses the body of the 30S subunit contacting proteins on the other side and probably holding the rRNA structure together. The combined cluster of proteins S8, S12 and S17 appears to hold together the shoulder and platform of the 30S subunit. This Rhizobium leguminosarum bv. trifolii (strain WSM2304) protein is Small ribosomal subunit protein uS12.